We begin with the raw amino-acid sequence, 229 residues long: Large ribosomal subunit protein uL4 (229 aa).

The segment at 62–103 (SRRQGTHQVKNRAAVSGSGKKPWKQKGTGRARHSSRRSPIWV) is disordered. The segment covering 82-97 (KPWKQKGTGRARHSSR) has biased composition (basic residues).

Belongs to the universal ribosomal protein uL4 family. In terms of assembly, part of the 50S ribosomal subunit.

One of the primary rRNA binding proteins, this protein initially binds near the 5'-end of the 23S rRNA. It is important during the early stages of 50S assembly. It makes multiple contacts with different domains of the 23S rRNA in the assembled 50S subunit and ribosome. Functionally, forms part of the polypeptide exit tunnel. In Mycoplasmopsis synoviae (strain 53) (Mycoplasma synoviae), this protein is Large ribosomal subunit protein uL4.